The primary structure comprises 382 residues: MSLNIFWFLPTHGDGKYLGTAEGARAVDHGYLAQIAQAADRLGYGGVLIPTGRSCEDSWLVAASLIPVTQNLKFLVALRPGIISPTVAARQAATLDRLSNARALFNLVTGGDPDELAGDGLHLSHAERYEASVEFTRIWRRVLEGETVDYDGKHIQVKGAKLLYPPIQQPRPPLYFGGSSDAAQDLAAEQVELYLTWGEPPAAVAEKIAQVREKAARQGREVRFGIRLHVIVRETNEEAWAAADRLISHLDQDTIDRAQASLARFDSVGQQRMAALHGGKTDNLEVSPNLWAGVGLVRGGAGTALVGDGPTVAARVREYAELGIDTFIFSGYPHLEESYRVAELLFPHLDVAPPARPESRGYVSPFGEMISSDILPKAAAAS.

The protein belongs to the SsuD family.

It carries out the reaction an alkanesulfonate + FMNH2 + O2 = an aldehyde + FMN + sulfite + H2O + 2 H(+). In terms of biological role, catalyzes the desulfonation of aliphatic sulfonates. The chain is Alkanesulfonate monooxygenase from Ectopseudomonas mendocina (strain ymp) (Pseudomonas mendocina).